The sequence spans 286 residues: ATP synthase gamma chain (286 aa).

Belongs to the ATPase gamma chain family. F-type ATPases have 2 components, CF(1) - the catalytic core - and CF(0) - the membrane proton channel. CF(1) has five subunits: alpha(3), beta(3), gamma(1), delta(1), epsilon(1). CF(0) has three main subunits: a, b and c.

The protein resides in the cell inner membrane. Its function is as follows. Produces ATP from ADP in the presence of a proton gradient across the membrane. The gamma chain is believed to be important in regulating ATPase activity and the flow of protons through the CF(0) complex. The protein is ATP synthase gamma chain of Shewanella sediminis (strain HAW-EB3).